The following is a 558-amino-acid chain: N-terminal histidine N-methyltransferase (558 aa).

The Cytoplasmic segment spans residues methionine 1–lysine 15. The chain crosses the membrane as a helical span at residues leucine 16–valine 32. At phenylalanine 33 to phenylalanine 49 the chain is on the lumenal side. A helical transmembrane segment spans residues histidine 50 to lysine 65. Residues aspartate 66 to isoleucine 77 lie on the Cytoplasmic side of the membrane. A helical transmembrane segment spans residues tyrosine 78–glutamine 96. Over glutamine 97–proline 104 the chain is Lumenal. Residues alanine 105–glutamine 131 form a helical membrane-spanning segment. At alanine 132–glutamate 145 the chain is on the cytoplasmic side. A helical membrane pass occupies residues histidine 146 to arginine 169. Over phenylalanine 170 to glycine 172 the chain is Lumenal. Residues serine 173–valine 194 traverse the membrane as a helical segment. Residues proline 195 to lysine 197 lie on the Cytoplasmic side of the membrane. A helical membrane pass occupies residues alanine 198–histidine 215. Residues leucine 216–tryptophan 558 are Lumenal-facing.

It belongs to the methyltransferase superfamily.

It is found in the endoplasmic reticulum membrane. The catalysed reaction is L-histidyl-[protein] + S-adenosyl-L-methionine = N(tele)-methyl-L-histidyl-[protein] + S-adenosyl-L-homocysteine + H(+). Protein-histidine N-methyltransferase that specifically mediates 3-methylhistidine (tele-methylhistidine) methylation at 'His-1', which protects the side-chain from oxidative damage. Methylates lytic polysaccharide monooxygenases (LPMOs) destined for secretion, including AN4702. This Emericella nidulans (strain FGSC A4 / ATCC 38163 / CBS 112.46 / NRRL 194 / M139) (Aspergillus nidulans) protein is N-terminal histidine N-methyltransferase.